Here is a 1017-residue protein sequence, read N- to C-terminus: Rho-GTPase-activating protein LRG1 (1017 aa).

The residue at position 1 (Met1) is an N-acetylmethionine. 2 consecutive LIM zinc-binding domains span residues 28-88 and 98-148; these read CARC…LCQY and CHVC…CKYH. Residues 155-184 enclose the LIM zinc-binding 3; truncated domain; sequence KRCKGCEFPISDQYIEFPKGEEIHCWHPEC. The region spanning 419–474 is the LIM zinc-binding 4 domain; the sequence is CAGCNKYIQEECIQFYEHRWHIACFTCSSCHKNINPRSLTDPTFNKEKKKILCSHC. Residue Ser562 is modified to Phosphoserine. The interval 570–602 is disordered; sequence TDLNDPTKQGDSKNLVIQTDDPSSSQQVSTREN. Residues 584-602 show a composition bias toward polar residues; it reads LVIQTDDPSSSQQVSTREN. One can recognise a Rho-GAP domain in the interval 730-953; the sequence is APLDVLCEKW…YLITHNEEMA (224 aa).

Interacts with CDC42, RHO1 and RHO2.

It localises to the cytoplasm. It is found in the bud. The protein resides in the bud neck. In terms of biological role, acts in signal transduction. Activates CDC42, RHO1 and RHO2. Negatively regulates 1,3-beta-glucan synthesis. May be responsible for the down-regulation of CDC42 during mating. The sequence is that of Rho-GTPase-activating protein LRG1 (LRG1) from Saccharomyces cerevisiae (strain ATCC 204508 / S288c) (Baker's yeast).